We begin with the raw amino-acid sequence, 349 residues long: Phenylalanine--tRNA ligase alpha subunit (349 aa).

E258 provides a ligand contact to Mg(2+).

The protein belongs to the class-II aminoacyl-tRNA synthetase family. Phe-tRNA synthetase alpha subunit type 1 subfamily. As to quaternary structure, tetramer of two alpha and two beta subunits. It depends on Mg(2+) as a cofactor.

It localises to the cytoplasm. It catalyses the reaction tRNA(Phe) + L-phenylalanine + ATP = L-phenylalanyl-tRNA(Phe) + AMP + diphosphate + H(+). This chain is Phenylalanine--tRNA ligase alpha subunit, found in Rickettsia rickettsii (strain Sheila Smith).